The primary structure comprises 252 residues: 3-dehydroquinate dehydratase (252 aa).

3-dehydroquinate-binding positions include Ser-21, 46-48 (EWR), and Arg-82. His-143 serves as the catalytic Proton donor/acceptor. The Schiff-base intermediate with substrate role is filled by Lys-170. The 3-dehydroquinate site is built by Arg-213, Ser-232, and Gln-236.

It belongs to the type-I 3-dehydroquinase family. Homodimer.

The catalysed reaction is 3-dehydroquinate = 3-dehydroshikimate + H2O. It functions in the pathway metabolic intermediate biosynthesis; chorismate biosynthesis; chorismate from D-erythrose 4-phosphate and phosphoenolpyruvate: step 3/7. Functionally, involved in the third step of the chorismate pathway, which leads to the biosynthesis of aromatic amino acids. Catalyzes the cis-dehydration of 3-dehydroquinate (DHQ) and introduces the first double bond of the aromatic ring to yield 3-dehydroshikimate. The chain is 3-dehydroquinate dehydratase from Escherichia coli O7:K1 (strain IAI39 / ExPEC).